Here is an 84-residue protein sequence, read N- to C-terminus: UPF0291 protein SMU_447 (84 aa).

A disordered region spans residues 57-84 (EGNDITPAKLKEIQRQKGIHGRKPEDNS).

This sequence belongs to the UPF0291 family.

It is found in the cytoplasm. This is UPF0291 protein SMU_447 from Streptococcus mutans serotype c (strain ATCC 700610 / UA159).